Consider the following 66-residue polypeptide: Large ribosomal subunit protein bL35 (66 aa).

This sequence belongs to the bacterial ribosomal protein bL35 family.

This Caulobacter sp. (strain K31) protein is Large ribosomal subunit protein bL35.